Consider the following 623-residue polypeptide: Methionine--tRNA ligase (623 aa).

The 'HIGH' region signature appears at 11 to 21 (PYANGPRHIGH). Positions 143, 146, 156, and 159 each coordinate Zn(2+). Residues 347–351 (KFSSS) carry the 'KMSKS' region motif. Residue Ser350 participates in ATP binding.

Belongs to the class-I aminoacyl-tRNA synthetase family. MetG type 1 subfamily. Monomer. Zn(2+) is required as a cofactor.

The protein resides in the cytoplasm. The enzyme catalyses tRNA(Met) + L-methionine + ATP = L-methionyl-tRNA(Met) + AMP + diphosphate. Functionally, is required not only for elongation of protein synthesis but also for the initiation of all mRNA translation through initiator tRNA(fMet) aminoacylation. This Bifidobacterium animalis subsp. lactis (strain AD011) protein is Methionine--tRNA ligase.